A 491-amino-acid chain; its full sequence is Ketol-acid reductoisomerase (NADP(+)) (491 aa).

The KARI N-terminal Rossmann domain occupies 15 to 208; that stretch reads AQLGKCRFMG…GGHRAGVLES (194 aa). Residues 45-48, Arg68, Arg76, Ser78, and 108-110 contribute to the NADP(+) site; these read CGAQ and DKQ. His132 is an active-site residue. Position 158 (Gly158) interacts with NADP(+). KARI C-terminal knotted domains follow at residues 209–344 and 345–484; these read SFVA…TAPQ and YEGK…MTDM. Mg(2+) is bound by residues Asp217, Glu221, Glu389, and Glu393. Ser414 lines the substrate pocket.

Belongs to the ketol-acid reductoisomerase family. It depends on Mg(2+) as a cofactor.

The enzyme catalyses (2R)-2,3-dihydroxy-3-methylbutanoate + NADP(+) = (2S)-2-acetolactate + NADPH + H(+). The catalysed reaction is (2R,3R)-2,3-dihydroxy-3-methylpentanoate + NADP(+) = (S)-2-ethyl-2-hydroxy-3-oxobutanoate + NADPH + H(+). It participates in amino-acid biosynthesis; L-isoleucine biosynthesis; L-isoleucine from 2-oxobutanoate: step 2/4. The protein operates within amino-acid biosynthesis; L-valine biosynthesis; L-valine from pyruvate: step 2/4. Functionally, involved in the biosynthesis of branched-chain amino acids (BCAA). Catalyzes an alkyl-migration followed by a ketol-acid reduction of (S)-2-acetolactate (S2AL) to yield (R)-2,3-dihydroxy-isovalerate. In the isomerase reaction, S2AL is rearranged via a Mg-dependent methyl migration to produce 3-hydroxy-3-methyl-2-ketobutyrate (HMKB). In the reductase reaction, this 2-ketoacid undergoes a metal-dependent reduction by NADPH to yield (R)-2,3-dihydroxy-isovalerate. The protein is Ketol-acid reductoisomerase (NADP(+)) of Citrobacter koseri (strain ATCC BAA-895 / CDC 4225-83 / SGSC4696).